A 3164-amino-acid chain; its full sequence is ORFB polyprotein (3164 aa).

In terms of domain architecture, Peptidase C8 spans 271-418 (MARAIGLSHA…IWNDPNILVG (148 aa)). Catalysis depends on for papain-like protease p48 activity residues Cys-341 and His-388. 6 helical membrane-spanning segments follow: residues 684–704 (LGFL…LLPF), 791–811 (IMIA…YVPY), 823–843 (YMLL…GYAC), 1166–1186 (AGLF…AAIM), 1215–1235 (FPIF…VSAY), and 1356–1376 (ALGF…LRPP). Residues 1419–1445 (IEEKPSDAGRSEPIPDNDKQEESDYDQ) are disordered. The tract at residues 1792 to 2207 (FYKSRKALKQ…AEDSADYRTW (416 aa)) is RNA-directed RNA polymerase. Helical transmembrane passes span 2494–2514 (VRIY…MHWV), 2516–2536 (LFVQ…WSFW), and 2589–2609 (LGLV…EVLF). In terms of domain architecture, Helicase ATP-binding spans 2650–2795 (ATKAIEHGHV…IPFLEPTLPK (146 aa)). 2663–2670 (AKTASGKS) is a binding site for ATP. Positions 2750–2753 (DEFH) match the DEFH box motif.

The protein in the C-terminal section; belongs to the DEAD box helicase family. Post-translationally, papain-like protease p48 is autocatalytically processed. The putative RNA-directed RNA polymerase/helicase is probably further processed.

The protein localises to the host membrane. The catalysed reaction is RNA(n) + a ribonucleoside 5'-triphosphate = RNA(n+1) + diphosphate. It catalyses the reaction ATP + H2O = ADP + phosphate + H(+). Its function is as follows. Papain-like protease p48 is a cysteine protease of the peptidase family C8. In Cryphonectria parasitica (Chestnut blight fungus), this protein is ORFB polyprotein.